The sequence spans 780 residues: Tricorn protease-interacting factor F3 (780 aa).

Substrate-binding positions include Glu-101 and 230–234 (GAMEN). His-265 lines the Zn(2+) pocket. The active-site Proton acceptor is the Glu-266. Residues His-269 and Glu-288 each contribute to the Zn(2+) site.

This sequence belongs to the peptidase M1 family. As to quaternary structure, part of the tricorn proteolytic complex. Requires Zn(2+) as cofactor.

The protein resides in the cytoplasm. Functionally, proteases F1, F2 and F3 degrade oligopeptides produced by Tricorn (themselves probably produced by the proteasome), yielding free amino acids. This chain is Tricorn protease-interacting factor F3 (trf3), found in Thermoplasma acidophilum (strain ATCC 25905 / DSM 1728 / JCM 9062 / NBRC 15155 / AMRC-C165).